The sequence spans 425 residues: Phosphomethylpyrimidine synthase (425 aa).

Residues Met94, Tyr123, His162, 184 to 186 (SRG), 225 to 228 (NGMR), and Glu264 each bind substrate. Residue His268 participates in Zn(2+) binding. Tyr291 provides a ligand contact to substrate. His332 is a binding site for Zn(2+). The [4Fe-4S] cluster site is built by Cys407, Cys410, and Cys414.

Belongs to the ThiC family. [4Fe-4S] cluster serves as cofactor.

It catalyses the reaction 5-amino-1-(5-phospho-beta-D-ribosyl)imidazole + S-adenosyl-L-methionine = 4-amino-2-methyl-5-(phosphooxymethyl)pyrimidine + CO + 5'-deoxyadenosine + formate + L-methionine + 3 H(+). It functions in the pathway cofactor biosynthesis; thiamine diphosphate biosynthesis. Its function is as follows. Catalyzes the synthesis of the hydroxymethylpyrimidine phosphate (HMP-P) moiety of thiamine from aminoimidazole ribotide (AIR) in a radical S-adenosyl-L-methionine (SAM)-dependent reaction. In Methanoregula boonei (strain DSM 21154 / JCM 14090 / 6A8), this protein is Phosphomethylpyrimidine synthase.